We begin with the raw amino-acid sequence, 338 residues long: Lipoate-protein ligase A (338 aa).

A BPL/LPL catalytic domain is found at 29–216 (DPNQRVLFLW…AFFSHYGERV (188 aa)). ATP contacts are provided by residues Arg71, 76-79 (GAVF), and Lys134. Lys134 contributes to the (R)-lipoate binding site.

It belongs to the LplA family. As to quaternary structure, monomer.

The protein localises to the cytoplasm. It catalyses the reaction L-lysyl-[lipoyl-carrier protein] + (R)-lipoate + ATP = N(6)-[(R)-lipoyl]-L-lysyl-[lipoyl-carrier protein] + AMP + diphosphate + H(+). Its pathway is protein modification; protein lipoylation via exogenous pathway; protein N(6)-(lipoyl)lysine from lipoate: step 1/2. It functions in the pathway protein modification; protein lipoylation via exogenous pathway; protein N(6)-(lipoyl)lysine from lipoate: step 2/2. Functionally, catalyzes both the ATP-dependent activation of exogenously supplied lipoate to lipoyl-AMP and the transfer of the activated lipoyl onto the lipoyl domains of lipoate-dependent enzymes. This is Lipoate-protein ligase A from Aeromonas hydrophila subsp. hydrophila (strain ATCC 7966 / DSM 30187 / BCRC 13018 / CCUG 14551 / JCM 1027 / KCTC 2358 / NCIMB 9240 / NCTC 8049).